The following is a 342-amino-acid chain: Holliday junction branch migration complex subunit RuvB (342 aa).

Residues 1-185 (MTVKPLRDVT…FPIQERLEYY (185 aa)) form a large ATPase domain (RuvB-L) region. ATP-binding positions include leucine 24, arginine 25, glycine 66, lysine 69, threonine 70, serine 71, 132-134 (EDY), arginine 175, tyrosine 185, and arginine 222. Threonine 70 contacts Mg(2+). The tract at residues 186–256 (GPAELKEIAV…VVDRTLRRLE (71 aa)) is small ATPAse domain (RuvB-S). A head domain (RuvB-H) region spans residues 259–342 (ARGLDAMDRR…RPGGKQGSLV (84 aa)). 2 residues coordinate DNA: arginine 314 and arginine 319.

Belongs to the RuvB family. As to quaternary structure, homohexamer. Forms an RuvA(8)-RuvB(12)-Holliday junction (HJ) complex. HJ DNA is sandwiched between 2 RuvA tetramers; dsDNA enters through RuvA and exits via RuvB. An RuvB hexamer assembles on each DNA strand where it exits the tetramer. Each RuvB hexamer is contacted by two RuvA subunits (via domain III) on 2 adjacent RuvB subunits; this complex drives branch migration. In the full resolvosome a probable DNA-RuvA(4)-RuvB(12)-RuvC(2) complex forms which resolves the HJ.

It localises to the cytoplasm. It carries out the reaction ATP + H2O = ADP + phosphate + H(+). In terms of biological role, the RuvA-RuvB-RuvC complex processes Holliday junction (HJ) DNA during genetic recombination and DNA repair, while the RuvA-RuvB complex plays an important role in the rescue of blocked DNA replication forks via replication fork reversal (RFR). RuvA specifically binds to HJ cruciform DNA, conferring on it an open structure. The RuvB hexamer acts as an ATP-dependent pump, pulling dsDNA into and through the RuvAB complex. RuvB forms 2 homohexamers on either side of HJ DNA bound by 1 or 2 RuvA tetramers; 4 subunits per hexamer contact DNA at a time. Coordinated motions by a converter formed by DNA-disengaged RuvB subunits stimulates ATP hydrolysis and nucleotide exchange. Immobilization of the converter enables RuvB to convert the ATP-contained energy into a lever motion, pulling 2 nucleotides of DNA out of the RuvA tetramer per ATP hydrolyzed, thus driving DNA branch migration. The RuvB motors rotate together with the DNA substrate, which together with the progressing nucleotide cycle form the mechanistic basis for DNA recombination by continuous HJ branch migration. Branch migration allows RuvC to scan DNA until it finds its consensus sequence, where it cleaves and resolves cruciform DNA. In Anaeromyxobacter sp. (strain K), this protein is Holliday junction branch migration complex subunit RuvB.